The primary structure comprises 472 residues: Methanethiol oxidase (472 aa).

A2 carries the N-acetylalanine modification. 2 positions are modified to phosphoserine: S111 and S467.

The protein belongs to the selenium-binding protein family. Interacts with USP33. The N-terminus is blocked. Highly expressed in liver, kidney and, to a lesser extent, lung.

It is found in the nucleus. The protein localises to the cytoplasm. Its subcellular location is the cytosol. The protein resides in the membrane. It catalyses the reaction methanethiol + O2 + H2O = hydrogen sulfide + formaldehyde + H2O2 + H(+). It functions in the pathway organosulfur degradation. Functionally, catalyzes the oxidation of methanethiol, an organosulfur compound known to be produced in substantial amounts by gut bacteria. Selenium-binding protein which may be involved in the sensing of reactive xenobiotics in the cytoplasm. May be involved in intra-Golgi protein transport. This is Methanethiol oxidase (Selenbp1) from Mus musculus (Mouse).